Here is a 449-residue protein sequence, read N- to C-terminus: Trigger factor (449 aa).

The PPIase FKBP-type domain maps to 173 to 258; that stretch reads GDRVTVDFVG…LKKVEWPHLP (86 aa).

The protein belongs to the FKBP-type PPIase family. Tig subfamily.

Its subcellular location is the cytoplasm. It catalyses the reaction [protein]-peptidylproline (omega=180) = [protein]-peptidylproline (omega=0). Its function is as follows. Involved in protein export. Acts as a chaperone by maintaining the newly synthesized protein in an open conformation. Functions as a peptidyl-prolyl cis-trans isomerase. The sequence is that of Trigger factor from Burkholderia pseudomallei (strain 1710b).